The following is a 503-amino-acid chain: Probable cytosol aminopeptidase (503 aa).

K272 and D277 together coordinate Mn(2+). K284 is an active-site residue. Positions 295, 354, and 356 each coordinate Mn(2+). Residue R358 is part of the active site.

The protein belongs to the peptidase M17 family. The cofactor is Mn(2+).

The protein resides in the cytoplasm. The catalysed reaction is Release of an N-terminal amino acid, Xaa-|-Yaa-, in which Xaa is preferably Leu, but may be other amino acids including Pro although not Arg or Lys, and Yaa may be Pro. Amino acid amides and methyl esters are also readily hydrolyzed, but rates on arylamides are exceedingly low.. It catalyses the reaction Release of an N-terminal amino acid, preferentially leucine, but not glutamic or aspartic acids.. In terms of biological role, presumably involved in the processing and regular turnover of intracellular proteins. Catalyzes the removal of unsubstituted N-terminal amino acids from various peptides. The protein is Probable cytosol aminopeptidase of Chlorobium limicola (strain DSM 245 / NBRC 103803 / 6330).